The sequence spans 200 residues: MARCKS-related protein (200 aa).

Residues 1 to 200 (MGSQSSKAPR…PTPASAEQNE (200 aa)) form a disordered region. Residue G2 is the site of N-myristoyl glycine attachment. Position 14 is a phosphothreonine (T14). The span at 16–26 (EEAAGASPAKA) shows a compositional bias: low complexity. Phosphoserine occurs at positions 22, 36, and 48. Low complexity predominate over residues 53-64 (GTDEAAGATGDA). Position 71 is a phosphoserine (S71). Residues 74-85 (AEAKGEVAPKET) show a composition bias toward basic and acidic residues. T85 bears the Phosphothreonine mark. The span at 86–98 (PKKKKKFSFKKPF) shows a compositional bias: basic residues. An effector domain involved in lipid-binding and calmodulin-binding region spans residues 87-110 (KKKKKFSFKKPFKLSGLSFKRNRK). A phosphoserine; by PKC mark is found at S93, S101, and S104. Phosphoserine is present on S119. A Phosphoserine; by MAPK8 modification is found at S120. A phosphoserine mark is found at S132 and S135. T148 is subject to Phosphothreonine; by MAPK8. Phosphoserine occurs at positions 151, 162, and 165. Positions 156 to 165 (AKGAEASAAS) are enriched in low complexity. T170 is subject to Phosphothreonine. A compositionally biased stretch (low complexity) spans 178–200 (AAEPSTPSGPESGPTPASAEQNE). T183 carries the post-translational modification Phosphothreonine; by MAPK8. The residue at position 192 (T192) is a Phosphothreonine.

Belongs to the MARCKS family. As to quaternary structure, binds to filamentous actin (F-actin), but not to monomeric G-actin, independently of its phosphorylation status. Interacts with calmodulin. Post-translationally, phosphorylated. Phosphorylation at Ser-120 and Thr-183 is non-redundantly catalyzed by MAPK8 in vivo. Phosphorylation at Thr-148 is preferentially catalyzed by MAPK8 in vivo, but this modification can also be catalyzed by other kinases in the absence of MAPK8. May be phosphorylated by protein kinase C, which disrupts the interaction with calmodulin. As to expression, expressed at high levels in brain cortex and hippocampus, including dentate gyrus, anterior olfactory nucleus, primary olfactory cortex, entorhinal cortex, medial preoptic area and dorsomedial hypothalamic nucleus (at protein level). Expressed in neuronal cells (at protein level). Detected in the retina. Strongly expressed in testis and uterus; expressed at lower levels in cerebellum, cerebrum, adipose tissue, spleen, kidney, thyroid, liver, lung, skeletal muscle and heart. Detected in T-cells and B-cells.

It localises to the cytoplasm. Its subcellular location is the cytoskeleton. The protein localises to the cell membrane. Its function is as follows. Involved in the control of cell movement by regulating actin cytoskeleton homeostasis and filopodium and lamellipodium formation. When unphosphorylated, induces cell migration. When phosphorylated by MAPK8, induces actin bundles formation and stabilization, thereby reducing actin plasticity, hence restricting cell movement, including neuronal migration. May be involved in coupling the protein kinase C and calmodulin signal transduction systems. This is MARCKS-related protein (Marcksl1) from Mus musculus (Mouse).